The chain runs to 339 residues: Autophagy protein 5 (339 aa).

A Glycyl lysine isopeptide (Lys-Gly) (interchain with G-Cter in ATG12) cross-link involves residue lysine 168. The span at 219–230 shows a compositional bias: low complexity; that stretch reads SSNSTQPSRPSS. The tract at residues 219–241 is disordered; it reads SSNSTQPSRPSSADPSGPPRAPD.

Belongs to the ATG5 family. In terms of assembly, conjugated with ATG12. In terms of processing, conjugated to ATG12; which is essential for autophagy.

Its subcellular location is the preautophagosomal structure membrane. In terms of biological role, involved in cytoplasm to vacuole transport (Cvt) and autophagic vesicle formation. Autophagy is essential for maintenance of amino acid levels and protein synthesis under nitrogen starvation. Required for selective autophagic degradation of the nucleus (nucleophagy). Also required for mitophagy, which eliminates defective or superfluous mitochondria in order to fulfill cellular energy requirements and prevent excess ROS production. Conjugation with ATG12, through a ubiquitin-like conjugating system involving ATG7 as an E1-like activating enzyme and ATG10 as an E2-like conjugating enzyme, is essential for its function. The ATG12-ATG5 conjugate acts as an E3-like enzyme which is required for lipidation of ATG8 and ATG8 association to the vesicle membranes. This is Autophagy protein 5 (ATG5) from Cryptococcus neoformans var. neoformans serotype D (strain B-3501A) (Filobasidiella neoformans).